Reading from the N-terminus, the 567-residue chain is Formate--tetrahydrofolate ligase (567 aa).

68 to 75 (TPLGEGKT) serves as a coordination point for ATP.

It belongs to the formate--tetrahydrofolate ligase family.

The catalysed reaction is (6S)-5,6,7,8-tetrahydrofolate + formate + ATP = (6R)-10-formyltetrahydrofolate + ADP + phosphate. It participates in one-carbon metabolism; tetrahydrofolate interconversion. In Desulforamulus reducens (strain ATCC BAA-1160 / DSM 100696 / MI-1) (Desulfotomaculum reducens), this protein is Formate--tetrahydrofolate ligase.